Reading from the N-terminus, the 463-residue chain is Carnosine N-methyltransferase (463 aa).

Disordered stretches follow at residues 1–64 and 79–104; these read MTKN…SQLK and KHNH…EKEE. Over residues 9–58 the composition is skewed to low complexity; sequence KSNNSNISNNNNNNNNNNNNNNNNNNNNNNNNNNNNNNNNNNNNNNNNKN. A compositionally biased stretch (basic and acidic residues) spans 79-93; that stretch reads KHNHDHSHDHNHDYD. Over residues 94–103 the composition is skewed to acidic residues; that stretch reads DNNEDDEEKE. S-adenosyl-L-methionine contacts are provided by glutamine 215, arginine 218, glycine 260, glutamate 281, aspartate 351, phenylalanine 352, and cysteine 367. Aspartate 371 serves as a coordination point for carnosine. Residue tyrosine 379 participates in S-adenosyl-L-methionine binding. The carnosine site is built by histidine 402 and tyrosine 450.

This sequence belongs to the carnosine N-methyltransferase family.

The catalysed reaction is carnosine + S-adenosyl-L-methionine = anserine + S-adenosyl-L-homocysteine + H(+). Its function is as follows. N-methyltransferase that mediates the formation of anserine (beta-alanyl-N(Pi)-methyl-L-histidine) from carnosine. This Dictyostelium discoideum (Social amoeba) protein is Carnosine N-methyltransferase.